Consider the following 643-residue polypeptide: 1-deoxy-D-xylulose-5-phosphate synthase (643 aa).

Residues histidine 78 and 119–121 each bind thiamine diphosphate; that span reads AHS. Mg(2+) is bound at residue aspartate 150. Thiamine diphosphate is bound by residues 151-152, asparagine 179, tyrosine 288, and glutamate 370; that span reads GS. Asparagine 179 serves as a coordination point for Mg(2+).

The protein belongs to the transketolase family. DXPS subfamily. As to quaternary structure, homodimer. It depends on Mg(2+) as a cofactor. Thiamine diphosphate serves as cofactor.

It carries out the reaction D-glyceraldehyde 3-phosphate + pyruvate + H(+) = 1-deoxy-D-xylulose 5-phosphate + CO2. It participates in metabolic intermediate biosynthesis; 1-deoxy-D-xylulose 5-phosphate biosynthesis; 1-deoxy-D-xylulose 5-phosphate from D-glyceraldehyde 3-phosphate and pyruvate: step 1/1. Functionally, catalyzes the acyloin condensation reaction between C atoms 2 and 3 of pyruvate and glyceraldehyde 3-phosphate to yield 1-deoxy-D-xylulose-5-phosphate (DXP). The chain is 1-deoxy-D-xylulose-5-phosphate synthase from Brucella canis (strain ATCC 23365 / NCTC 10854 / RM-666).